Consider the following 127-residue polypeptide: Aspartate 1-decarboxylase (127 aa).

Serine 25 (schiff-base intermediate with substrate; via pyruvic acid) is an active-site residue. Serine 25 carries the pyruvic acid (Ser) modification. Threonine 57 contributes to the substrate binding site. Tyrosine 58 serves as the catalytic Proton donor. 73-75 (GAA) is a substrate binding site.

This sequence belongs to the PanD family. Heterooctamer of four alpha and four beta subunits. It depends on pyruvate as a cofactor. Is synthesized initially as an inactive proenzyme, which is activated by self-cleavage at a specific serine bond to produce a beta-subunit with a hydroxyl group at its C-terminus and an alpha-subunit with a pyruvoyl group at its N-terminus.

The protein resides in the cytoplasm. The enzyme catalyses L-aspartate + H(+) = beta-alanine + CO2. The protein operates within cofactor biosynthesis; (R)-pantothenate biosynthesis; beta-alanine from L-aspartate: step 1/1. Its function is as follows. Catalyzes the pyruvoyl-dependent decarboxylation of aspartate to produce beta-alanine. In Carboxydothermus hydrogenoformans (strain ATCC BAA-161 / DSM 6008 / Z-2901), this protein is Aspartate 1-decarboxylase.